Reading from the N-terminus, the 445-residue chain is Glutamate-1-semialdehyde 2,1-aminomutase (445 aa).

K264 carries the N6-(pyridoxal phosphate)lysine modification.

This sequence belongs to the class-III pyridoxal-phosphate-dependent aminotransferase family. HemL subfamily. The cofactor is pyridoxal 5'-phosphate.

It localises to the cytoplasm. It catalyses the reaction (S)-4-amino-5-oxopentanoate = 5-aminolevulinate. The protein operates within porphyrin-containing compound metabolism; protoporphyrin-IX biosynthesis; 5-aminolevulinate from L-glutamyl-tRNA(Glu): step 2/2. The sequence is that of Glutamate-1-semialdehyde 2,1-aminomutase from Halobacterium salinarum (strain ATCC 29341 / DSM 671 / R1).